We begin with the raw amino-acid sequence, 564 residues long: Laccase-22 (564 aa).

Positions Met1–Ser25 are cleaved as a signal peptide. Plastocyanin-like domains follow at residues Asn36–Gly152 and Lys162–Thr314. 2 N-linked (GlcNAc...) asparagine glycosylation sites follow: Asn41 and Asn82. His86 and His88 together coordinate Cu cation. An N-linked (GlcNAc...) asparagine glycan is attached at Asn118. Residues His131 and His133 each contribute to the Cu cation site. 8 N-linked (GlcNAc...) asparagine glycosylation sites follow: Asn191, Asn302, Asn331, Asn379, Asn389, Asn424, Asn437, and Asn447. In terms of domain architecture, Plastocyanin-like 3 spans Asp414–Lys548. 7 residues coordinate Cu cation: His465, His468, His470, His527, Cys528, His529, and His533.

The protein belongs to the multicopper oxidase family. Cu cation serves as cofactor.

It localises to the secreted. It is found in the extracellular space. The protein resides in the apoplast. The catalysed reaction is 4 hydroquinone + O2 = 4 benzosemiquinone + 2 H2O. Functionally, lignin degradation and detoxification of lignin-derived products. This is Laccase-22 (LAC22) from Oryza sativa subsp. japonica (Rice).